A 389-amino-acid polypeptide reads, in one-letter code: Chalcone synthase 6 (389 aa).

C164 is a catalytic residue.

Belongs to the thiolase-like superfamily. Chalcone/stilbene synthases family.

It carries out the reaction (E)-4-coumaroyl-CoA + 3 malonyl-CoA + 3 H(+) = 2',4,4',6'-tetrahydroxychalcone + 3 CO2 + 4 CoA. It participates in secondary metabolite biosynthesis; flavonoid biosynthesis. In terms of biological role, the primary product of this enzyme is 4,2',4',6'-tetrahydroxychalcone (also termed naringenin-chalcone or chalcone) which can under specific conditions spontaneously isomerize into naringenin. In Pisum sativum (Garden pea), this protein is Chalcone synthase 6 (CHS6).